A 79-amino-acid chain; its full sequence is Small ribosomal subunit protein uS17 (79 aa).

It belongs to the universal ribosomal protein uS17 family. Part of the 30S ribosomal subunit.

Its function is as follows. One of the primary rRNA binding proteins, it binds specifically to the 5'-end of 16S ribosomal RNA. This chain is Small ribosomal subunit protein uS17, found in Caulobacter sp. (strain K31).